Reading from the N-terminus, the 236-residue chain is tRNA1(Val) (adenine(37)-N6)-methyltransferase (236 aa).

It belongs to the methyltransferase superfamily. tRNA (adenine-N(6)-)-methyltransferase family.

It is found in the cytoplasm. The enzyme catalyses adenosine(37) in tRNA1(Val) + S-adenosyl-L-methionine = N(6)-methyladenosine(37) in tRNA1(Val) + S-adenosyl-L-homocysteine + H(+). Functionally, specifically methylates the adenine in position 37 of tRNA(1)(Val) (anticodon cmo5UAC). In Actinobacillus pleuropneumoniae serotype 5b (strain L20), this protein is tRNA1(Val) (adenine(37)-N6)-methyltransferase.